Consider the following 225-residue polypeptide: NAD(P)H-quinone oxidoreductase subunit K, chloroplastic (225 aa).

[4Fe-4S] cluster contacts are provided by Cys43, Cys44, Cys108, and Cys139.

This sequence belongs to the complex I 20 kDa subunit family. As to quaternary structure, NDH is composed of at least 16 different subunits, 5 of which are encoded in the nucleus. [4Fe-4S] cluster is required as a cofactor.

Its subcellular location is the plastid. It is found in the chloroplast thylakoid membrane. The enzyme catalyses a plastoquinone + NADH + (n+1) H(+)(in) = a plastoquinol + NAD(+) + n H(+)(out). It catalyses the reaction a plastoquinone + NADPH + (n+1) H(+)(in) = a plastoquinol + NADP(+) + n H(+)(out). Functionally, NDH shuttles electrons from NAD(P)H:plastoquinone, via FMN and iron-sulfur (Fe-S) centers, to quinones in the photosynthetic chain and possibly in a chloroplast respiratory chain. The immediate electron acceptor for the enzyme in this species is believed to be plastoquinone. Couples the redox reaction to proton translocation, and thus conserves the redox energy in a proton gradient. In Eucalyptus globulus subsp. globulus (Tasmanian blue gum), this protein is NAD(P)H-quinone oxidoreductase subunit K, chloroplastic.